The following is a 213-amino-acid chain: Peptide methionine sulfoxide reductase MsrA (213 aa).

The active site involves Cys52.

The protein belongs to the MsrA Met sulfoxide reductase family.

The catalysed reaction is L-methionyl-[protein] + [thioredoxin]-disulfide + H2O = L-methionyl-(S)-S-oxide-[protein] + [thioredoxin]-dithiol. It catalyses the reaction [thioredoxin]-disulfide + L-methionine + H2O = L-methionine (S)-S-oxide + [thioredoxin]-dithiol. Functionally, has an important function as a repair enzyme for proteins that have been inactivated by oxidation. Catalyzes the reversible oxidation-reduction of methionine sulfoxide in proteins to methionine. The chain is Peptide methionine sulfoxide reductase MsrA from Enterobacter sp. (strain 638).